The following is a 161-amino-acid chain: MTELKIKTEKVVKQLTKESLKSVLKIPKEKIDSVSKFYATGKRKNAIARVWLKVGKGKIVVNNKILNQYFPSETYVKTILQPFILTKTIDQYDVICTVKGGGISGQKGAILHGISKALDKSAPCFHAILRKGGLLTRDSRVVERKKYGQRKARKKTQFSKR.

It belongs to the universal ribosomal protein uS9 family.

The sequence is that of Small ribosomal subunit protein uS9 (rpsI) from Rickettsia prowazekii (strain Madrid E).